A 187-amino-acid chain; its full sequence is Oleosin Zm-II (187 aa).

An N-acetylalanine modification is found at A2. Positions 2-51 (ADRDRSGIYGGAHATYGQQQQQGGGGRPMGEQVKKGMLHDKGPTASQALT) are polar. The disordered stretch occupies residues 17–42 (YGQQQQQGGGGRPMGEQVKKGMLHDK). Over residues 33-42 (QVKKGMLHDK) the composition is skewed to basic and acidic residues. 3 consecutive transmembrane segments (helical) span residues 50–70 (LTVA…GLAL), 83–103 (VFLI…TAVM), and 104–124 (GFLT…CLAN). Residues 52 to 123 (VATLFPLGGL…GGLSSLTCLA (72 aa)) form a hydrophobic region. The segment covering 155–169 (TAQAGQAIQGRAQEA) has biased composition (low complexity). A disordered region spans residues 155 to 187 (TAQAGQAIQGRAQEAGTGGGAGAGAGGGGRASS). Positions 170–187 (GTGGGAGAGAGGGGRASS) are enriched in gly residues.

This sequence belongs to the oleosin family. Post-translationally, the N-terminus is blocked. As to expression, found in embryonic axis, scutellum, and aleurone layer.

It is found in the lipid droplet. The protein localises to the membrane. May have a structural role to stabilize the lipid body during desiccation of the seed by preventing coalescence of the oil. Probably interacts with both lipid and phospholipid moieties of lipid bodies. May also provide recognition signals for specific lipase anchorage in lipolysis during seedling growth. The protein is Oleosin Zm-II (OLE18) of Zea mays (Maize).